Here is a 534-residue protein sequence, read N- to C-terminus: Phenylalanine N-monooxygenase CYP79D16 (534 aa).

The first 21 residues, 1 to 21 (MEANVGFLTLCLAITLVRFLM), serve as a signal peptide directing secretion. Position 472 (cysteine 472) interacts with heme. An N-linked (GlcNAc...) asparagine glycan is attached at asparagine 500.

Belongs to the cytochrome P450 family. The cofactor is heme. Expressed in seedlings.

It carries out the reaction L-phenylalanine + 2 reduced [NADPH--hemoprotein reductase] + 2 O2 = (E)-phenylacetaldehyde oxime + 2 oxidized [NADPH--hemoprotein reductase] + CO2 + 3 H2O + 2 H(+). Its function is as follows. Involved in L-phenylalanine-derived cyanogenic glycoside biosynthesis, including prunasin and amygdalin defensive agents. Catalyzes the conversion of L-phenylalanine (Phe) into phenylacetaldoxime (PAOx). Cannot use tyrosine (Tyr), tryptophan (Trp) and valine (Val) as substrates. The chain is Phenylalanine N-monooxygenase CYP79D16 from Prunus mume (Japanese apricot).